A 242-amino-acid chain; its full sequence is Small ribosomal subunit protein uS7m (242 aa).

The N-terminal 37 residues, 1-37 (MAAPTAKVSRGWSGLALGVRIAVLRLPGLTQVRWSRY), are a transit peptide targeting the mitochondrion. At Lys228 the chain carries N6-acetyllysine.

The protein belongs to the universal ribosomal protein uS7 family. Component of the mitochondrial ribosome small subunit (28S) which comprises a 12S rRNA and about 30 distinct proteins.

Its subcellular location is the mitochondrion. The sequence is that of Small ribosomal subunit protein uS7m (MRPS7) from Bos taurus (Bovine).